Reading from the N-terminus, the 402-residue chain is mRNA cap guanine-N(7) methyltransferase (402 aa).

Positions 1-11 (MDHVLNPEEKV) are enriched in basic and acidic residues. The segment at 1–75 (MDHVLNPEEK…PRLEEGHGSL (75 aa)) is disordered. The span at 35 to 50 (PKLSASEKSLPGNTKS) shows a compositional bias: polar residues. A compositionally biased stretch (basic and acidic residues) spans 55-72 (KAAEPDSPPKRPRLEEGH). One can recognise an mRNA cap 0 methyltransferase domain in the interval 94 to 401 (SRIFHLRNFN…IYLLFAFEKQ (308 aa)). An mRNA-binding site is contributed by 103-104 (NN). Residues Lys107, Gly131, Asp153, Asp187, Gln210, and Tyr215 each coordinate S-adenosyl-L-methionine.

It belongs to the class I-like SAM-binding methyltransferase superfamily. mRNA cap 0 methyltransferase family.

It localises to the nucleus. The catalysed reaction is a 5'-end (5'-triphosphoguanosine)-ribonucleoside in mRNA + S-adenosyl-L-methionine = a 5'-end (N(7)-methyl 5'-triphosphoguanosine)-ribonucleoside in mRNA + S-adenosyl-L-homocysteine. Its function is as follows. Catalytic subunit of the mRNA-capping methyltransferase RNMT:RAMAC complex that methylates the N7 position of the added guanosine to the 5'-cap structure of mRNAs. Binds RNA containing 5'-terminal GpppC. This chain is mRNA cap guanine-N(7) methyltransferase (rnmt), found in Xenopus laevis (African clawed frog).